The chain runs to 272 residues: Ribosomal RNA small subunit methyltransferase A (272 aa).

Residues N18, L20, G45, E66, D91, and N113 each contribute to the S-adenosyl-L-methionine site.

Belongs to the class I-like SAM-binding methyltransferase superfamily. rRNA adenine N(6)-methyltransferase family. RsmA subfamily.

It localises to the cytoplasm. It carries out the reaction adenosine(1518)/adenosine(1519) in 16S rRNA + 4 S-adenosyl-L-methionine = N(6)-dimethyladenosine(1518)/N(6)-dimethyladenosine(1519) in 16S rRNA + 4 S-adenosyl-L-homocysteine + 4 H(+). Specifically dimethylates two adjacent adenosines (A1518 and A1519) in the loop of a conserved hairpin near the 3'-end of 16S rRNA in the 30S particle. May play a critical role in biogenesis of 30S subunits. This Yersinia enterocolitica serotype O:8 / biotype 1B (strain NCTC 13174 / 8081) protein is Ribosomal RNA small subunit methyltransferase A.